A 248-amino-acid polypeptide reads, in one-letter code: MTFGAKTSGSDDLKAIISAISTLVEEATFVATAEGISFRGMDPSHVALIDISWPNSAFEKYECDSDIKFGVRIDEFSKLIKRADKKDSIEISISEQNMLLVTVGKNKKYKMRLIESSATDTPLPKIPYDSKIILSSSKFDKILGDVQVVSDYLTIHTSDSKGDFSGKGDSGEVVIDLDKDDEGIEEISSKEDSVGTYSLEYLNPVVKAVGTTAGFITCEFSSAKPLRIEFKVANIGRIHFYLAPRVES.

The protein belongs to the PCNA family. Homotrimer. The subunits circularize to form a toroid; DNA passes through its center. Replication factor C (RFC) is required to load the toroid on the DNA.

Sliding clamp subunit that acts as a moving platform for DNA processing. Responsible for tethering the catalytic subunit of DNA polymerase and other proteins to DNA during high-speed replication. This is DNA polymerase sliding clamp from Nitrosopumilus maritimus (strain SCM1).